The primary structure comprises 261 residues: Arcelin-5A (261 aa).

The signal sequence occupies residues 1 to 21 (MASSKLLSLALFLVLLTHANS). Residues Asn43, Asn91, and Asn100 are each glycosylated (N-linked (GlcNAc...) asparagine). Cys167 and Cys203 form a disulfide bridge. A propeptide spanning residues 255 to 261 (ILLNNIL) is cleaved from the precursor.

Belongs to the leguminous lectin family. In terms of assembly, monomer. In terms of processing, the C-terminal segment appears to be highly susceptible to proteolysis.

Seed storage. This carbohydrate-binding lectin has toxic effects on bean bruchid pests. This is Arcelin-5A (ARC5A) from Phaseolus vulgaris (Kidney bean).